The chain runs to 665 residues: DNA ligase (665 aa).

Residues 35-39 (DAIYD), 88-89 (SL), and glutamate 117 contribute to the NAD(+) site. The active-site N6-AMP-lysine intermediate is the lysine 119. NAD(+)-binding residues include arginine 140, glutamate 174, lysine 290, and lysine 314. The Zn(2+) site is built by cysteine 406, cysteine 409, cysteine 424, and cysteine 429. The BRCT domain occupies 588-665 (KKTERFAQLS…EEAFNELLVS (78 aa)).

This sequence belongs to the NAD-dependent DNA ligase family. LigA subfamily. Mg(2+) is required as a cofactor. Requires Mn(2+) as cofactor.

It carries out the reaction NAD(+) + (deoxyribonucleotide)n-3'-hydroxyl + 5'-phospho-(deoxyribonucleotide)m = (deoxyribonucleotide)n+m + AMP + beta-nicotinamide D-nucleotide.. Its function is as follows. DNA ligase that catalyzes the formation of phosphodiester linkages between 5'-phosphoryl and 3'-hydroxyl groups in double-stranded DNA using NAD as a coenzyme and as the energy source for the reaction. It is essential for DNA replication and repair of damaged DNA. This chain is DNA ligase, found in Metamycoplasma arthritidis (strain 158L3-1) (Mycoplasma arthritidis).